A 252-amino-acid polypeptide reads, in one-letter code: Hydroxyacylglutathione hydrolase (252 aa).

His-54, His-56, Asp-58, His-59, His-111, Asp-128, and His-166 together coordinate Zn(2+).

It belongs to the metallo-beta-lactamase superfamily. Glyoxalase II family. As to quaternary structure, monomer. Requires Zn(2+) as cofactor.

The catalysed reaction is an S-(2-hydroxyacyl)glutathione + H2O = a 2-hydroxy carboxylate + glutathione + H(+). Its pathway is secondary metabolite metabolism; methylglyoxal degradation; (R)-lactate from methylglyoxal: step 2/2. Its function is as follows. Thiolesterase that catalyzes the hydrolysis of S-D-lactoyl-glutathione to form glutathione and D-lactic acid. The sequence is that of Hydroxyacylglutathione hydrolase from Aliivibrio fischeri (strain MJ11) (Vibrio fischeri).